We begin with the raw amino-acid sequence, 266 residues long: MTNISAFLVKKLRARTGVGIMDCKRALMCMKGDIDKSVDFLRKMGQIKAEKKQFLLTQNGSIFISFDHNLGVMLELSSETDFVSKHKDFLCLGEKILDYVLTHPMESIEFIRKHFEDLRTSLVMQVNENIVIRRIQTLNKKYITGYLHGRRIGVLVQTSSINNHLAKEIAMHIAASNPKYLRSDLVPKSIMEREYEIQLELAMQSKKSKPILEKIIKGRMIKFANEISLLGQNFIFDPHRKVSEVILKNNIDVISFVRYEVGEKYI.

Positions 80–83 are involved in Mg(2+) ion dislocation from EF-Tu; the sequence is TDFV.

The protein belongs to the EF-Ts family.

It is found in the cytoplasm. Functionally, associates with the EF-Tu.GDP complex and induces the exchange of GDP to GTP. It remains bound to the aminoacyl-tRNA.EF-Tu.GTP complex up to the GTP hydrolysis stage on the ribosome. The polypeptide is Elongation factor Ts (Buchnera aphidicola subsp. Baizongia pistaciae (strain Bp)).